We begin with the raw amino-acid sequence, 444 residues long: Tol-Pal system protein TolB (444 aa).

An N-terminal signal peptide occupies residues 1-31; it reads MSFDLNRRQLMISAATAAGALALGPARDAFG.

The protein belongs to the TolB family. The Tol-Pal system is composed of five core proteins: the inner membrane proteins TolA, TolQ and TolR, the periplasmic protein TolB and the outer membrane protein Pal. They form a network linking the inner and outer membranes and the peptidoglycan layer.

It is found in the periplasm. In terms of biological role, part of the Tol-Pal system, which plays a role in outer membrane invagination during cell division and is important for maintaining outer membrane integrity. The protein is Tol-Pal system protein TolB of Rhodopseudomonas palustris (strain ATCC BAA-98 / CGA009).